The primary structure comprises 79 residues: Small ribosomal subunit protein bS18 (79 aa).

It belongs to the bacterial ribosomal protein bS18 family. As to quaternary structure, part of the 30S ribosomal subunit. Forms a tight heterodimer with protein bS6.

Functionally, binds as a heterodimer with protein bS6 to the central domain of the 16S rRNA, where it helps stabilize the platform of the 30S subunit. The chain is Small ribosomal subunit protein bS18 from Bacillus pumilus (strain SAFR-032).